A 146-amino-acid polypeptide reads, in one-letter code: 3-dehydroquinate dehydratase (146 aa).

Residue Y22 is the Proton acceptor of the active site. 3 residues coordinate substrate: N74, H80, and D87. The active-site Proton donor is H100. Residues 101–102 (LS) and R111 contribute to the substrate site.

It belongs to the type-II 3-dehydroquinase family. As to quaternary structure, homododecamer.

The enzyme catalyses 3-dehydroquinate = 3-dehydroshikimate + H2O. Its pathway is metabolic intermediate biosynthesis; chorismate biosynthesis; chorismate from D-erythrose 4-phosphate and phosphoenolpyruvate: step 3/7. Catalyzes a trans-dehydration via an enolate intermediate. This is 3-dehydroquinate dehydratase from Clostridium perfringens (strain 13 / Type A).